Here is a 414-residue protein sequence, read N- to C-terminus: F-box protein At3g26010 (414 aa).

The 48-residue stretch at 5–52 (NRTIHLTDAIWTEILARLPLRIIARFKSVSKTWKSTIESVYFRRLFVS) folds into the F-box domain.

This is F-box protein At3g26010 from Arabidopsis thaliana (Mouse-ear cress).